Here is a 100-residue protein sequence, read N- to C-terminus: EKC/KEOPS complex subunit GON7 (100 aa).

Methionine 1 is subject to N-acetylmethionine. A disordered region spans residues alanine 61–serine 100. The segment covering proline 64–asparagine 81 has biased composition (acidic residues).

In terms of assembly, component of the EKC/KEOPS complex composed of at least GON7, TP53RK, TPRKB, OSGEP and LAGE3; the whole complex dimerizes.

It localises to the nucleus. Its function is as follows. Component of the EKC/KEOPS complex that is required for the formation of a threonylcarbamoyl group on adenosine at position 37 (t(6)A37) in tRNAs that read codons beginning with adenine. The complex is probably involved in the transfer of the threonylcarbamoyl moiety of threonylcarbamoyl-AMP (TC-AMP) to the N6 group of A37. GON7 plays a supporting role to the catalytic subunit OSGEP in the complex. The sequence is that of EKC/KEOPS complex subunit GON7 from Homo sapiens (Human).